The sequence spans 200 residues: uncharacterized protein (200 aa).

Residues 1 to 24 (MSRVFSCVLRACVCAGLCCWVCMG) form the signal peptide. The interval 124–200 (GGRDLPMHGA…GEGGDNGEGE (77 aa)) is disordered. Over residues 184–200 (LGDEGETGEGGDNGEGE) the composition is skewed to acidic residues.

This is an uncharacterized protein from Homo sapiens (Human).